Reading from the N-terminus, the 527-residue chain is Probable guanine deaminase (527 aa).

Zn(2+) is bound by residues H79 and H81. Substrate contacts are provided by residues 81-84 (HAPQ), 212-213 (RF), 239-242 (HISE), and D329. The Zn(2+) site is built by H239 and D329.

The protein belongs to the metallo-dependent hydrolases superfamily. ATZ/TRZ family. Zn(2+) is required as a cofactor.

The enzyme catalyses guanine + H2O + H(+) = xanthine + NH4(+). The protein operates within purine metabolism; guanine degradation; xanthine from guanine: step 1/1. Catalyzes the hydrolytic deamination of guanine, producing xanthine and ammonia. The sequence is that of Probable guanine deaminase from Schizosaccharomyces pombe (strain 972 / ATCC 24843) (Fission yeast).